A 160-amino-acid polypeptide reads, in one-letter code: Transcriptional regulator MraZ (160 aa).

SpoVT-AbrB domains are found at residues 5 to 51 and 80 to 123; these read TFEK…GKAL and MAKL…EREA.

It belongs to the MraZ family. In terms of assembly, forms oligomers.

It localises to the cytoplasm. Its subcellular location is the nucleoid. This Phenylobacterium zucineum (strain HLK1) protein is Transcriptional regulator MraZ.